We begin with the raw amino-acid sequence, 687 residues long: Calcium-binding protein SP84 (687 aa).

The first 19 residues, 1–19, serve as a signal peptide directing secretion; it reads MMRAIYLLVVVCWAAAANA. EF-hand domains lie at 152 to 187, 257 to 292, 406 to 441, 476 to 511, and 579 to 614; these read LESD…HKNK, LTEI…TDDV, KTEA…PHMV, IENA…NNDA, and MTER…VKDL. Ca(2+) is bound by residues Asp592, Asn594, Asp596, Glu598, and Asp603.

Expressed in salivary glands where expression is strongest in type III cells in the posterior lobe of the principal glands (at protein level). Not expressed in midgut, Malpighian tubules or epidermis.

Its subcellular location is the secreted. Functionally, binds calcium. During feeding of the phloem sap, protein is injected into sieve tubes of rice plants. This process may suppress the sieve-element clogging and facilitate continuous ingestion from sieve tubes. The chain is Calcium-binding protein SP84 from Nephotettix cincticeps (Green rice leafhopper).